The primary structure comprises 354 residues: Alpha-D-ribose 1-methylphosphonate 5-triphosphate synthase subunit PhnI (354 aa).

This sequence belongs to the PhnI family. As to quaternary structure, forms a complex with PhnG, PhnH, PhnJ and PhnK with the suggested composition PhnG(4)H(2)I(2)J(2)K.

The enzyme catalyses methylphosphonate + ATP = alpha-D-ribose 1-methylphosphonate 5-triphosphate + adenine. It carries out the reaction ATP + H2O = D-ribose 5-triphosphate + adenine. In terms of biological role, together with PhnG, PhnH and PhnL is required for the transfer of the ribose triphosphate moiety from ATP to methyl phosphonate. PhnI alone has nucleosidase activity, catalyzing the hydrolysis of ATP or GTP forming alpha-D-ribose 5-triphosphate and adenine or guanine, respectively. The protein is Alpha-D-ribose 1-methylphosphonate 5-triphosphate synthase subunit PhnI (phnI) of Escherichia coli (strain K12).